The sequence spans 159 residues: Major allergen Mal d 1 (159 aa).

Belongs to the BetVI family.

The protein is Major allergen Mal d 1 of Malus domestica (Apple).